Reading from the N-terminus, the 356-residue chain is Chorismate synthase (356 aa).

Arginine 46 lines the NADP(+) pocket. Residues 122–124 (RSS), 234–235 (NG), glycine 274, 289–293 (KPTPS), and arginine 315 each bind FMN.

This sequence belongs to the chorismate synthase family. In terms of assembly, homotetramer. It depends on FMNH2 as a cofactor.

It carries out the reaction 5-O-(1-carboxyvinyl)-3-phosphoshikimate = chorismate + phosphate. Its pathway is metabolic intermediate biosynthesis; chorismate biosynthesis; chorismate from D-erythrose 4-phosphate and phosphoenolpyruvate: step 7/7. Catalyzes the anti-1,4-elimination of the C-3 phosphate and the C-6 proR hydrogen from 5-enolpyruvylshikimate-3-phosphate (EPSP) to yield chorismate, which is the branch point compound that serves as the starting substrate for the three terminal pathways of aromatic amino acid biosynthesis. This reaction introduces a second double bond into the aromatic ring system. This Campylobacter fetus subsp. fetus (strain 82-40) protein is Chorismate synthase.